A 109-amino-acid polypeptide reads, in one-letter code: Nucleoid-associated protein MS1507 (109 aa).

The segment at 1 to 21 (MFGKGGLGNLMKQAQQMQERM) is disordered.

The protein belongs to the YbaB/EbfC family. Homodimer.

The protein localises to the cytoplasm. Its subcellular location is the nucleoid. In terms of biological role, binds to DNA and alters its conformation. May be involved in regulation of gene expression, nucleoid organization and DNA protection. This Mannheimia succiniciproducens (strain KCTC 0769BP / MBEL55E) protein is Nucleoid-associated protein MS1507.